The chain runs to 139 residues: Transcription antitermination protein NusB (139 aa).

It belongs to the NusB family.

Involved in transcription antitermination. Required for transcription of ribosomal RNA (rRNA) genes. Binds specifically to the boxA antiterminator sequence of the ribosomal RNA (rrn) operons. This chain is Transcription antitermination protein NusB, found in Erwinia tasmaniensis (strain DSM 17950 / CFBP 7177 / CIP 109463 / NCPPB 4357 / Et1/99).